A 342-amino-acid chain; its full sequence is Phenylalanine--tRNA ligase alpha subunit (342 aa).

Glu257 lines the Mg(2+) pocket.

It belongs to the class-II aminoacyl-tRNA synthetase family. Phe-tRNA synthetase alpha subunit type 1 subfamily. In terms of assembly, tetramer of two alpha and two beta subunits. Requires Mg(2+) as cofactor.

It is found in the cytoplasm. It catalyses the reaction tRNA(Phe) + L-phenylalanine + ATP = L-phenylalanyl-tRNA(Phe) + AMP + diphosphate + H(+). In Legionella pneumophila subsp. pneumophila (strain Philadelphia 1 / ATCC 33152 / DSM 7513), this protein is Phenylalanine--tRNA ligase alpha subunit.